We begin with the raw amino-acid sequence, 526 residues long: GMP synthase [glutamine-hydrolyzing] (526 aa).

The Glutamine amidotransferase type-1 domain occupies 9–208 (RILILDFGSQ…LVNICGCKQL (200 aa)). The active-site Nucleophile is the Cys-86. Catalysis depends on residues His-182 and Glu-184. The region spanning 209–401 (WTPGRIIEDA…LGLPYDMVYR (193 aa)) is the GMPS ATP-PPase domain. An ATP-binding site is contributed by 236–242 (SGGVDSS).

As to quaternary structure, homodimer.

It carries out the reaction XMP + L-glutamine + ATP + H2O = GMP + L-glutamate + AMP + diphosphate + 2 H(+). Its pathway is purine metabolism; GMP biosynthesis; GMP from XMP (L-Gln route): step 1/1. Functionally, catalyzes the synthesis of GMP from XMP. This Hahella chejuensis (strain KCTC 2396) protein is GMP synthase [glutamine-hydrolyzing].